The chain runs to 110 residues: uncharacterized protein (110 aa).

2 disordered regions span residues 1–41 (MEWG…ERAQ) and 65–110 (LRQL…ASES). A coiled-coil region spans residues 38 to 68 (ERAQQLLDAVEQRQRQLLDTIAACEEMLRQL).

This is an uncharacterized protein from Mus musculus (Mouse).